The sequence spans 216 residues: DNA-directed RNA polymerase subunit alpha (216 aa).

Belongs to the RNA polymerase alpha chain family. In terms of assembly, in plastids the minimal PEP RNA polymerase catalytic core is composed of four subunits: alpha, beta, beta', and beta''. When a (nuclear-encoded) sigma factor is associated with the core the holoenzyme is formed, which can initiate transcription.

It localises to the plastid. It is found in the chloroplast. The catalysed reaction is RNA(n) + a ribonucleoside 5'-triphosphate = RNA(n+1) + diphosphate. Its function is as follows. DNA-dependent RNA polymerase catalyzes the transcription of DNA into RNA using the four ribonucleoside triphosphates as substrates. The polypeptide is DNA-directed RNA polymerase subunit alpha (rpoA) (Euglena gracilis).